Here is a 90-residue protein sequence, read N- to C-terminus: uncharacterized protein (90 aa).

A disordered region spans residues 53–90 (WRARPDANDADTTSSSSSSETCTESDDSSDVPPARYAV). Low complexity predominate over residues 63-74 (DTTSSSSSSETC).

This is an uncharacterized protein from Orgyia pseudotsugata (Douglas-fir tussock moth).